We begin with the raw amino-acid sequence, 306 residues long: Ubiquitin-conjugating enzyme E2Q-like protein CG4502 (306 aa).

Positions 18-77 (HKSSNNNNNNNNNHNNNINNNNNNDKVDGATGSSPNINNNNNNNNNNNNHDGAAAPSSAG) are disordered. Low complexity-rich tracts occupy residues 22-41 (NNNN…NNNN) and 53-77 (NINN…SSAG). One can recognise a UBC core domain in the interval 138-299 (IRTRRLMKEY…VKTHEKYGWV (162 aa)). C234 functions as the Glycyl thioester intermediate in the catalytic mechanism.

The protein belongs to the ubiquitin-conjugating enzyme family.

It carries out the reaction S-ubiquitinyl-[E1 ubiquitin-activating enzyme]-L-cysteine + [E2 ubiquitin-conjugating enzyme]-L-cysteine = [E1 ubiquitin-activating enzyme]-L-cysteine + S-ubiquitinyl-[E2 ubiquitin-conjugating enzyme]-L-cysteine.. The protein operates within protein modification; protein ubiquitination. Catalyzes the covalent attachment of ubiquitin to other proteins. The sequence is that of Ubiquitin-conjugating enzyme E2Q-like protein CG4502 from Drosophila melanogaster (Fruit fly).